We begin with the raw amino-acid sequence, 327 residues long: COP9 signalosome complex subunit 7 (327 aa).

The 162-residue stretch at 4 to 165 (VHHRALDALQ…NPPTVNVTSV (162 aa)) folds into the PCI domain. Disordered stretches follow at residues 233 to 260 (GGEQ…AGWK) and 276 to 327 (GGSN…GKKS). Residues 236-255 (QLQGGNPGQGQGQGQGGLGK) are compositionally biased toward gly residues. The span at 315–327 (GARHSKRFLGKKS) shows a compositional bias: basic residues.

Belongs to the CSN7/EIF3M family. CSN7 subfamily. Component of the COP9 signalosome (CSN) complex. Present in uninduced vegetative hyphae, induced conidiating cultures and in both conidiospores and ascospores.

The protein localises to the cytoplasm. Its subcellular location is the nucleus. Component of the COP9 signalosome (CSN) complex that acts as an regulator of the ubiquitin (Ubl) conjugation pathway by mediating the deneddylation of the cullin subunit of SCF-type E3 ubiquitin-protein ligase complexes. The CSN complex seems to link protein degradation to sexual development. May be required for sporulation only at elevated temperatures. The chain is COP9 signalosome complex subunit 7 (csnG) from Emericella nidulans (strain FGSC A4 / ATCC 38163 / CBS 112.46 / NRRL 194 / M139) (Aspergillus nidulans).